Here is a 660-residue protein sequence, read N- to C-terminus: Dual specificity mitogen-activated protein kinase kinase 1 (660 aa).

Residues 1-57 (MNTNTNTNTNISSSGNNIINTPTTNNNNKNNNNNNNNNNNSNNSNNNSSNNNNNNNN) show a composition bias toward low complexity. 3 disordered regions span residues 1-60 (MNTN…NAVG), 105-169 (KGES…FNNL), and 204-229 (NNNY…SNNN). Lys-105 participates in a covalent cross-link: Glycyl lysine isopeptide (Lys-Gly) (interchain with G-Cter in SUMO). The segment covering 123-148 (LHSNLNPQLLASPTSSESMDFNQGFY) has biased composition (polar residues). Over residues 149-169 (NNNNNNNNNNNNNNLNNFNNL) the composition is skewed to low complexity. A Protein kinase domain is found at 292 to 641 (LKIIRVLGRG…ASNLLNHEFV (350 aa)). Residues 298–306 (LGRGAGGVV) and Lys-321 contribute to the ATP site. Catalysis depends on Asp-414, which acts as the Proton acceptor. Disordered regions lie at residues 491 to 510 (SNLP…QQQQ) and 539 to 573 (NNSN…VLDI). Low complexity-rich tracts occupy residues 496-510 (QQQQ…QQQQ) and 539-569 (NNSN…NNNN).

Belongs to the protein kinase superfamily. STE Ser/Thr protein kinase family. MAP kinase kinase subfamily. In terms of assembly, interacts with mip1. It depends on Mg(2+) as a cofactor. Sumoylated and ubiquitinated in response to chemoattractant stimulation. Sumoylation is linked to kinase activation and results in translocation.

It localises to the cytoplasm. The protein resides in the nucleus. The enzyme catalyses L-seryl-[protein] + ATP = O-phospho-L-seryl-[protein] + ADP + H(+). It carries out the reaction L-threonyl-[protein] + ATP = O-phospho-L-threonyl-[protein] + ADP + H(+). It catalyses the reaction L-tyrosyl-[protein] + ATP = O-phospho-L-tyrosyl-[protein] + ADP + H(+). In terms of biological role, required for cAMP-mediated activation of guanylyl cyclase activity and plays an essential role in aggregation, morphogenesis, and chemotaxis. Appears to act upstream of erk1 but not erk2. The sequence is that of Dual specificity mitogen-activated protein kinase kinase 1 from Dictyostelium discoideum (Social amoeba).